The following is a 420-amino-acid chain: MTLLALGINHKTAPVSLRERVTFSPDTIGEALDNLLQHPLVKGGVVLSTCNRTELYLSVEQQDNLYEQLIGWLCEYHQLNPRELKSSIYWHCDNEAVSHLMRVASGLDSLVLGEPQILGQVKKAFAESQHSHSLSSELERLFQKSFSVAKRIRTETEIGSNAVSVAFAACTLARQIFESLSELNILLVGAGETIELAARHLREHRVHHMMIANRTKEKAQVLADEVQAEVITLPEIDIRLAEADIVISSTASPLPIIGKGMVERALKLRRNQPMLLVDIAVPRDIEPDVEKLNNVYLYSVDDLQAIIQQNLAQRKAAAVQAECIVQQESRYFMDWLRSQSAVNSIREYRNQAEQMRAEMAAKALTAINQGADVEQAINQLTHQLMNRLIHAPTKSLQQAASNGDLERLNLLRDSLGLEHN.

Substrate-binding positions include 49–52 (TCNR), Ser109, 114–116 (EPQ), and Gln120. Residue Cys50 is the Nucleophile of the active site. Residue 189-194 (GAGETI) coordinates NADP(+).

The protein belongs to the glutamyl-tRNA reductase family. As to quaternary structure, homodimer.

It catalyses the reaction (S)-4-amino-5-oxopentanoate + tRNA(Glu) + NADP(+) = L-glutamyl-tRNA(Glu) + NADPH + H(+). The protein operates within porphyrin-containing compound metabolism; protoporphyrin-IX biosynthesis; 5-aminolevulinate from L-glutamyl-tRNA(Glu): step 1/2. Catalyzes the NADPH-dependent reduction of glutamyl-tRNA(Glu) to glutamate 1-semialdehyde (GSA). This Photorhabdus laumondii subsp. laumondii (strain DSM 15139 / CIP 105565 / TT01) (Photorhabdus luminescens subsp. laumondii) protein is Glutamyl-tRNA reductase.